Here is a 361-residue protein sequence, read N- to C-terminus: tRNA-specific 2-thiouridylase MnmA (361 aa).

ATP is bound by residues 10–17 (GMSGGVDS) and Met-36. Residue Cys-104 is the Nucleophile of the active site. Cys-104 and Cys-202 form a disulfide bridge. ATP is bound at residue Gly-128. The interval 152–154 (KDQ) is interaction with tRNA. The Cysteine persulfide intermediate role is filled by Cys-202. Positions 308-309 (RY) are interaction with tRNA.

It belongs to the MnmA/TRMU family.

The protein resides in the cytoplasm. The enzyme catalyses S-sulfanyl-L-cysteinyl-[protein] + uridine(34) in tRNA + AH2 + ATP = 2-thiouridine(34) in tRNA + L-cysteinyl-[protein] + A + AMP + diphosphate + H(+). Catalyzes the 2-thiolation of uridine at the wobble position (U34) of tRNA, leading to the formation of s(2)U34. In Clostridioides difficile (strain 630) (Peptoclostridium difficile), this protein is tRNA-specific 2-thiouridylase MnmA.